Consider the following 571-residue polypeptide: Isthmin-2 (571 aa).

Positions 1-26 are cleaved as a signal peptide; that stretch reads MRALRDRAGLLLCVLLLAALLEAALG. Disordered stretches follow at residues 30–60, 116–141, and 257–294; these read KKPR…LKEE, ANTT…LREE, and EKDR…DEEE. A compositionally biased stretch (polar residues) spans 116 to 131; the sequence is ANTTLSTPNPDTQASA. N-linked (GlcNAc...) asparagine glycosylation occurs at N117. Over residues 257 to 268 the composition is skewed to basic and acidic residues; that stretch reads EKDRAPGEKGEE. A compositionally biased stretch (acidic residues) spans 269–294; sequence KEEDEDYPSEDIEGEDQEDKEEDEEE. N300 carries an N-linked (GlcNAc...) asparagine glycan. Residues 327 to 371 form the TSP type-1 domain; it reads EPQKEWSPWSPCSGNCSTGKQQRTRPCGYGCTATETRTCDLPSCP. 3 disulfides stabilise this stretch: C338–C365, C342–C370, and C353–C357. Residue N392 is glycosylated (N-linked (GlcNAc...) asparagine). In terms of domain architecture, AMOP spans 396–559; the sequence is MHDQDVDSCE…RACTDNPLEE (164 aa).

Belongs to the isthmin family. In terms of tissue distribution, expressed at high levels in the placenta and at moderate levels in the pancreas, kidney, heart, liver, lung, brain and skeletal muscle.

Its subcellular location is the secreted. The chain is Isthmin-2 (ISM2) from Homo sapiens (Human).